The primary structure comprises 117 residues: Large ribosomal subunit protein bL19 (117 aa).

The protein belongs to the bacterial ribosomal protein bL19 family.

Its function is as follows. This protein is located at the 30S-50S ribosomal subunit interface and may play a role in the structure and function of the aminoacyl-tRNA binding site. The sequence is that of Large ribosomal subunit protein bL19 from Bacteroides fragilis (strain ATCC 25285 / DSM 2151 / CCUG 4856 / JCM 11019 / LMG 10263 / NCTC 9343 / Onslow / VPI 2553 / EN-2).